The chain runs to 378 residues: D-alanine--D-alanine ligase (378 aa).

One can recognise an ATP-grasp domain in the interval 149 to 374; the sequence is KVLLAAAGIP…YTDLITKLIE (226 aa). 189–247 contributes to the ATP binding site; that stretch reads EAGLQYPLFVKPSRAGSSFGVTKVEHEGDAAELAAAVYEASRHDWRILVEQGIDAREIE. Positions 328, 341, and 343 each coordinate Mg(2+).

This sequence belongs to the D-alanine--D-alanine ligase family. Mg(2+) is required as a cofactor. The cofactor is Mn(2+).

Its subcellular location is the cytoplasm. It catalyses the reaction 2 D-alanine + ATP = D-alanyl-D-alanine + ADP + phosphate + H(+). It functions in the pathway cell wall biogenesis; peptidoglycan biosynthesis. Cell wall formation. The polypeptide is D-alanine--D-alanine ligase (Bifidobacterium adolescentis (strain ATCC 15703 / DSM 20083 / NCTC 11814 / E194a)).